A 391-amino-acid chain; its full sequence is MRGVFLDKDKIPYDLVTKKLNEWYTSIKNDQVEQAEIIKTEVEKELLNMEENQDALLYYQLLEFRHEIMLSYMKSKEIEDLNNAYETIKEIEKQGQLTGMLEYYFYFFKGMYEFRRKELISAISAYRIAESKLSEVEDEIEKAEFFFKVSYVYYYMKQTYFSMNYANRALKIFREYEEYAVQTVRCQFIVAGNLIDSLEYERALEQFLKSLEISKESNIEHLIAMSHMNIGICYDELKEYKKASQHLILALEIFEKSKHSFLTKTLFTLTYVEAKQQNYNVALIYFRKGRFIADKSDDKEYSAKFKILEGLFFSDGETQLIKNAFSYLASRKMFADVENFSIEVADYFHEQGNLMLSNEYYRMSIEARRKIKKGEIIDENQPDSIGSSDFK.

6 TPR repeats span residues 62–95, 150–183, 184–217, 224–257, 275–311, and 338–371; these read LEFRHEIMLSYMKSKEIEDLNNAYETIKEIEKQG, SYVYYYMKQTYFSMNYANRALKIFREYEEYAVQT, VRCQFIVAGNLIDSLEYERALEQFLKSLEISKES, AMSHMNIGICYDELKEYKKASQHLILALEIFEKS, KQQNYNVALIYFRKGRFIADKSDDKEYSAKFKILEGL, and ENFSIEVADYFHEQGNLMLSNEYYRMSIEARRKI.

It belongs to the Rap family.

It localises to the cytoplasm. Its activity is regulated as follows. Inhibited by PhrI. In terms of biological role, activates ICEBs1 gene expression, excision and transfer by inactivating the ICEBs1 repressor protein ImmR. RapI-mediated induction likely results from an increase in the specific activity of the protease ImmA, which mediates proteolysis of ImmR. In addition, is involved in regulation of sporulation. Acts as a phosphatase that specifically dephosphorylates the sporulation initiation phosphotransferase Spo0F and inhibits its activity. In Bacillus subtilis (strain 168), this protein is Response regulator aspartate phosphatase I (rapI).